The following is a 184-amino-acid chain: MVNSSTSSDQLDVDLSFTPFPVQDLDVFVNSDTLELMKNPSKWIEEIGSWIRFIQVNSALKCPEIVLNSSQFSLGLELTNDKKILDLNHAWLGQSKATDVLSFPIIDETFFGVSNECIELGDIVISVPTAIRQAKDNNADLFRELRWLATHGLLHLLGWDHSDEESLHKMLLIQEQLLEIRGIL.

Zn(2+) is bound by residues H151, H155, and H161.

This sequence belongs to the endoribonuclease YbeY family. The cofactor is Zn(2+).

The protein resides in the cytoplasm. Its function is as follows. Single strand-specific metallo-endoribonuclease involved in late-stage 70S ribosome quality control and in maturation of the 3' terminus of the 16S rRNA. The chain is Endoribonuclease YbeY from Prochlorococcus marinus (strain NATL2A).